We begin with the raw amino-acid sequence, 162 residues long: Superoxide dismutase [Cu-Zn] (162 aa).

The signal sequence occupies residues methionine 1 to alanine 20. Cu cation is bound by residues histidine 66, histidine 68, and histidine 83. A disulfide bridge connects residues cysteine 73 and cysteine 158. Residues histidine 83, histidine 92, histidine 100, and aspartate 103 each contribute to the Zn(2+) site. Histidine 137 contacts Cu cation.

This sequence belongs to the Cu-Zn superoxide dismutase family. As to quaternary structure, homodimer. Cu cation serves as cofactor. It depends on Zn(2+) as a cofactor.

Its subcellular location is the periplasm. It catalyses the reaction 2 superoxide + 2 H(+) = H2O2 + O2. In terms of biological role, destroys radicals which are normally produced within the cells and which are toxic to biological systems. The protein is Superoxide dismutase [Cu-Zn] (sodC) of Legionella pneumophila.